The chain runs to 296 residues: (3R)-3-[(carboxymethyl)amino]fatty acid oxygenase/decarboxylase (296 aa).

(3R)-3-[(carboxymethyl)amino]butanoate is bound by residues tyrosine 66, tyrosine 71, and glycine 98. 3 residues coordinate (3R)-3-{[carboxy(hydroxy)methyl]amino}butanoate: tyrosine 66, tyrosine 71, and glycine 98. Fe(2+) is bound by residues histidine 102 and aspartate 104. The (3R)-3-[(carboxymethyl)amino]butanoate site is built by tyrosine 105 and lysine 163. 2 residues coordinate (3R)-3-{[carboxy(hydroxy)methyl]amino}butanoate: tyrosine 105 and lysine 163. Residue histidine 265 coordinates Fe(2+). Position 269 (histidine 269) interacts with 2-oxoglutarate. Residue arginine 280 participates in (3R)-3-[(carboxymethyl)amino]butanoate binding. (3R)-3-{[carboxy(hydroxy)methyl]amino}butanoate is bound at residue arginine 280.

The protein belongs to the TfdA dioxygenase family. It depends on Fe(2+) as a cofactor.

It catalyses the reaction a (3R)-3-[(carboxymethyl)amino]fatty acid + 2 2-oxoglutarate + 2 O2 = a (3R)-3-isocyanyl-fatty acid + 2 succinate + 3 CO2 + 2 H2O. The catalysed reaction is a (3R)-3-[(carboxymethyl)amino]fatty acid + 2-oxoglutarate + O2 = a (3R)-3-{[carboxy(hydroxy)methyl]amino}fatty acid + succinate + CO2. The enzyme catalyses a (3R)-3-{[carboxy(hydroxy)methyl]amino}fatty acid + 2-oxoglutarate + O2 = a (3R)-3-isocyanyl-fatty acid + succinate + 2 CO2 + 2 H2O. It carries out the reaction (3R)-3-[(carboxymethyl)amino]butanoate + 2 2-oxoglutarate + 2 O2 = (3R)-3-isocyanylbutanoate + 2 succinate + 3 CO2 + 2 H2O. It catalyses the reaction (3R)-3-[(carboxymethyl)amino]butanoate + 2-oxoglutarate + O2 = (3R)-3-{[carboxy(hydroxy)methyl]amino}butanoate + succinate + CO2. The catalysed reaction is (3R)-3-{[carboxy(hydroxy)methyl]amino}butanoate + 2-oxoglutarate + O2 = (3R)-3-isocyanylbutanoate + succinate + 2 CO2 + 2 H2O. In terms of biological role, involved in the biosynthesis of a unique class of isonitrile lipopeptides (INLPs). Catalyzes the conversion of (3R)-3-[(carboxymethyl)amino]fatty acids such as (3R)-3-[(carboxymethyl)amino]butanoate (CABA) to (3R)-3-isocyanylbutanoate (INBA) through an oxidative decarboxylation mechanism, thereby generating the isonitrile group of INLPs. This Streptomyces coeruleorubidus protein is (3R)-3-[(carboxymethyl)amino]fatty acid oxygenase/decarboxylase.